The sequence spans 552 residues: ATP synthase subunit alpha (552 aa).

173 to 180 is a binding site for ATP; that stretch reads GDRQTGKT. The tract at residues 526–552 is disordered; that stretch reads ASPLDPSAVRKESIPVHRAPARTDDEG. Basic and acidic residues predominate over residues 533–552; the sequence is AVRKESIPVHRAPARTDDEG.

It belongs to the ATPase alpha/beta chains family. In terms of assembly, F-type ATPases have 2 components, CF(1) - the catalytic core - and CF(0) - the membrane proton channel. CF(1) has five subunits: alpha(3), beta(3), gamma(1), delta(1), epsilon(1). CF(0) has three main subunits: a(1), b(2) and c(9-12). The alpha and beta chains form an alternating ring which encloses part of the gamma chain. CF(1) is attached to CF(0) by a central stalk formed by the gamma and epsilon chains, while a peripheral stalk is formed by the delta and b chains.

It is found in the cell membrane. It carries out the reaction ATP + H2O + 4 H(+)(in) = ADP + phosphate + 5 H(+)(out). Produces ATP from ADP in the presence of a proton gradient across the membrane. The alpha chain is a regulatory subunit. In Frankia alni (strain DSM 45986 / CECT 9034 / ACN14a), this protein is ATP synthase subunit alpha.